A 277-amino-acid polypeptide reads, in one-letter code: Large ribosomal subunit protein uL2 (277 aa).

2 disordered regions span residues 36–55 and 213–277; these read PLPK…RHHG and WKGI…RKKK.

Belongs to the universal ribosomal protein uL2 family. Part of the 50S ribosomal subunit. Forms a bridge to the 30S subunit in the 70S ribosome.

Its function is as follows. One of the primary rRNA binding proteins. Required for association of the 30S and 50S subunits to form the 70S ribosome, for tRNA binding and peptide bond formation. It has been suggested to have peptidyltransferase activity; this is somewhat controversial. Makes several contacts with the 16S rRNA in the 70S ribosome. This is Large ribosomal subunit protein uL2 from Staphylococcus saprophyticus subsp. saprophyticus (strain ATCC 15305 / DSM 20229 / NCIMB 8711 / NCTC 7292 / S-41).